The sequence spans 459 residues: UDP-glycosyltransferase 78D3 (459 aa).

Residues 338 to 340 (APQ), 355 to 363 (HGGWNSVLE), and 377 to 380 (FGDH) contribute to the UDP-alpha-D-glucose site.

The protein belongs to the UDP-glycosyltransferase family.

Its function is as follows. Possesses low quercetin 3-O-glucosyltransferase activity in vitro. The sequence is that of UDP-glycosyltransferase 78D3 (UGT78D3) from Arabidopsis thaliana (Mouse-ear cress).